The primary structure comprises 813 residues: Phosphate transporter PHO1 homolog 3 (813 aa).

Residues 1 to 359 form the SPX domain; sequence MKFGKEFSSQ…SRDATKPYMK (359 aa). The Cytoplasmic portion of the chain corresponds to 1 to 411; it reads MKFGKEFSSQ…KAKRERHRIT (411 aa). A disordered region spans residues 214 to 266; it reads EHMEAIQEGGSSRAGLMEDDEEDEDEQNETSVVSTGAIDNETTTSRMRGARPS. Over residues 230–241 the composition is skewed to acidic residues; that stretch reads MEDDEEDEDEQN. Residues 412-432 form a helical membrane-spanning segment; it reads FSTGFSAGCVFSLIVALVAII. Residues 433 to 450 lie on the Extracellular side of the membrane; the sequence is RTRNLLEMEGQKEYMNTM. A helical transmembrane segment spans residues 451–471; the sequence is FPLYSLFGFIVLHIIVYAANI. Residues 472-496 lie on the Cytoplasmic side of the membrane; the sequence is YYWRRYRVNYSFIFGFKQGTELGYR. The chain crosses the membrane as a helical span at residues 497–517; that stretch reads QVLLVGFSIGVLALLCVLANL. Topologically, residues 518-533 are extracellular; that stretch reads DMEADPKTKAYQARTE. A helical transmembrane segment spans residues 534–554; sequence ILPLILLAAMFIVLVLPFNYF. The Cytoplasmic portion of the chain corresponds to 555–684; sequence YRSSRFFFLT…SIQKGQVAWR (130 aa). In terms of domain architecture, EXS spans 618 to 813; it reads KESDVYNTFF…NYDEDDDKDN (196 aa). The helical transmembrane segment at 685 to 705 threads the bilayer; sequence VLAAVFSFIAAIFCTYWDFVH. Residues 706–729 lie on the Extracellular side of the membrane; the sequence is DWGLLNRTSKNRWLRDKLLVPQKK. The chain crosses the membrane as a helical span at residues 730–750; the sequence is VYFIAMVLNVLLRFAWIQTVL. Over 751–813 the chain is Cytoplasmic; that stretch reads DFNFSFMHRQ…NYDEDDDKDN (63 aa).

The protein belongs to the SYG1 (TC 2.A.94) family. Expressed in vascular cylinder of roots, leaves and filaments. Expressed in receptacle and stigma apex.

Its subcellular location is the cell membrane. Functionally, may transport inorganic phosphate (Pi). In Arabidopsis thaliana (Mouse-ear cress), this protein is Phosphate transporter PHO1 homolog 3 (PHO1;H3).